We begin with the raw amino-acid sequence, 274 residues long: Eukaryotic translation initiation factor 3 subunit G (274 aa).

Phosphoserine is present on residues Ser-146, Ser-164, and Ser-171. The tract at residues 149–170 is disordered; it reads ANTSAAATPEPDTDASGKYVPP. Residues 191–270 enclose the RRM domain; it reads TTLKISQLNT…LILHLEWPKK (80 aa).

This sequence belongs to the eIF-3 subunit G family. Component of the eukaryotic translation initiation factor 3 (eIF-3) complex.

Its subcellular location is the cytoplasm. RNA-binding component of the eukaryotic translation initiation factor 3 (eIF-3) complex, which is involved in protein synthesis of a specialized repertoire of mRNAs and, together with other initiation factors, stimulates binding of mRNA and methionyl-tRNAi to the 40S ribosome. The eIF-3 complex specifically targets and initiates translation of a subset of mRNAs involved in cell proliferation. This subunit can bind 18S rRNA. The sequence is that of Eukaryotic translation initiation factor 3 subunit G from Meyerozyma guilliermondii (strain ATCC 6260 / CBS 566 / DSM 6381 / JCM 1539 / NBRC 10279 / NRRL Y-324) (Yeast).